The primary structure comprises 572 residues: Phosphoenolpyruvate-protein phosphotransferase (572 aa).

Catalysis depends on H191, which acts as the Tele-phosphohistidine intermediate. The phosphoenolpyruvate site is built by R298 and R334. Mg(2+) is bound by residues E433 and D457. Phosphoenolpyruvate is bound by residues 456-457 (ND) and R467. Catalysis depends on C504, which acts as the Proton donor.

Belongs to the PEP-utilizing enzyme family. Homodimer. The cofactor is Mg(2+).

The protein resides in the cytoplasm. The catalysed reaction is L-histidyl-[protein] + phosphoenolpyruvate = N(pros)-phospho-L-histidyl-[protein] + pyruvate. In terms of biological role, general (non sugar-specific) component of the phosphoenolpyruvate-dependent sugar phosphotransferase system (sugar PTS). This major carbohydrate active-transport system catalyzes the phosphorylation of incoming sugar substrates concomitantly with their translocation across the cell membrane. Enzyme I transfers the phosphoryl group from phosphoenolpyruvate (PEP) to the phosphoryl carrier protein (HPr). The polypeptide is Phosphoenolpyruvate-protein phosphotransferase (ptsI) (Staphylococcus aureus (strain COL)).